A 202-amino-acid polypeptide reads, in one-letter code: Recombination protein RecR (202 aa).

The C4-type zinc finger occupies 57–72 (CRDCRTFTEDDICAVC). The Toprim domain maps to 81-176 (GQICVVESPA…PATRIAHGVP (96 aa)).

It belongs to the RecR family.

Functionally, may play a role in DNA repair. It seems to be involved in an RecBC-independent recombinational process of DNA repair. It may act with RecF and RecO. This Photobacterium profundum (strain SS9) protein is Recombination protein RecR.